The primary structure comprises 196 residues: Glutathione-specific gamma-glutamylcyclotransferase 1 (196 aa).

15-20 contributes to the substrate binding site; sequence IFGYGS. Glutamate 95 serves as the catalytic Proton acceptor.

This sequence belongs to the gamma-glutamylcyclotransferase family. ChaC subfamily.

Its subcellular location is the cytoplasm. The protein localises to the cytosol. The protein resides in the golgi apparatus. It is found in the trans-Golgi network. It carries out the reaction glutathione = L-cysteinylglycine + 5-oxo-L-proline. In terms of biological role, catalyzes the cleavage of glutathione into 5-oxo-L-proline and a Cys-Gly dipeptide. Acts specifically on glutathione, but not on other gamma-glutamyl peptides. Glutathione depletion is an important factor for apoptosis initiation and execution. Acts as a pro-apoptotic component of the unfolded protein response pathway by mediating the pro-apoptotic effects of the ATF4-ATF3-DDIT3/CHOP cascade. Negative regulator of Notch signaling pathway involved in embryonic neurogenesis: acts by inhibiting Notch cleavage by furin, maintaining Notch in an immature inactive form, thereby promoting neurogenesis in embryos. This chain is Glutathione-specific gamma-glutamylcyclotransferase 1, found in Danio rerio (Zebrafish).